We begin with the raw amino-acid sequence, 422 residues long: L-cysteine:1D-myo-inositol 2-amino-2-deoxy-alpha-D-glucopyranoside ligase (422 aa).

The interval 1 to 34 (MKSWSTPAPPTVPSRPDRLRLHDTATGRTRHPGN) is disordered. The span at 15-25 (RPDRLRLHDTA) shows a compositional bias: basic and acidic residues. Residue Cys-44 participates in Zn(2+) binding. Residues 44-47 (CGIT), Thr-59, and 82-84 (NVT) contribute to the L-cysteinyl-5'-AMP site. The 'HIGH' region motif lies at 46 to 56 (ITPYDATHLGH). Residues 196–201 (ERGGDP) carry the 'ERGGDP' region motif. Residue Trp-237 participates in L-cysteinyl-5'-AMP binding. A Zn(2+)-binding site is contributed by Cys-241. 259-261 (GSD) provides a ligand contact to L-cysteinyl-5'-AMP. A Zn(2+)-binding site is contributed by His-266. L-cysteinyl-5'-AMP is bound at residue Val-292. The 'KMSKS' region motif lies at 298-302 (KMSKS).

Belongs to the class-I aminoacyl-tRNA synthetase family. MshC subfamily. Monomer. Requires Zn(2+) as cofactor.

The enzyme catalyses 1D-myo-inositol 2-amino-2-deoxy-alpha-D-glucopyranoside + L-cysteine + ATP = 1D-myo-inositol 2-(L-cysteinylamino)-2-deoxy-alpha-D-glucopyranoside + AMP + diphosphate + H(+). In terms of biological role, catalyzes the ATP-dependent condensation of GlcN-Ins and L-cysteine to form L-Cys-GlcN-Ins. In Micrococcus luteus (strain ATCC 4698 / DSM 20030 / JCM 1464 / CCM 169 / CCUG 5858 / IAM 1056 / NBRC 3333 / NCIMB 9278 / NCTC 2665 / VKM Ac-2230) (Micrococcus lysodeikticus), this protein is L-cysteine:1D-myo-inositol 2-amino-2-deoxy-alpha-D-glucopyranoside ligase.